The chain runs to 414 residues: Secernin-1 (414 aa).

Alanine 2 is subject to N-acetylalanine. Cysteine 9 is a catalytic residue.

The protein belongs to the peptidase C69 family. Secernin subfamily.

Its subcellular location is the cytoplasm. Regulates exocytosis in mast cells. Increases both the extent of secretion and the sensitivity of mast cells to stimulation with calcium. The chain is Secernin-1 (SCRN1) from Bos taurus (Bovine).